Consider the following 165-residue polypeptide: Regulator of ribonuclease activity A (165 aa).

Belongs to the RraA family. In terms of assembly, homotrimer. Binds to both RNA-binding sites in the C-terminal region of Rne and to RhlB.

The protein localises to the cytoplasm. Globally modulates RNA abundance by binding to RNase E (Rne) and regulating its endonucleolytic activity. Can modulate Rne action in a substrate-dependent manner by altering the composition of the degradosome. Modulates RNA-binding and helicase activities of the degradosome. This Actinobacillus pleuropneumoniae serotype 5b (strain L20) protein is Regulator of ribonuclease activity A.